The sequence spans 162 residues: Caveolin-2 (162 aa).

At 1–86 (MGLETEKADV…FEISKYVMYK (86 aa)) the chain is on the cytoplasmic side. Tyr-19 bears the Phosphotyrosine; by SRC mark. Ser-20 and Ser-23 each carry phosphoserine. Tyr-27 is modified (phosphotyrosine). Ser-36 carries the post-translational modification Phosphoserine. Residues 87–107 (FLTVFLAIPLAFIAGILFATL) constitute an intramembrane region (helical). Topologically, residues 108–162 (SCLHIWILMPFVKTCLMVLPSVQTIWKSVTDVVIGPLCTSVGRSFSSVSMQLSHD) are cytoplasmic.

The protein belongs to the caveolin family. In terms of assembly, monomer or homodimer. Interacts with CAV1; the interaction forms a stable heterooligomeric complex that is required for targeting to lipid rafts and for caveolae formation. Tyrosine phosphorylated forms do not form heterooligomers with the Tyr-19-phosphorylated form existing as a monomer or dimer, and the Tyr-27-form as a monomer only. Interacts (tyrosine phosphorylated form) with the SH2 domain-containing proteins, RASA1, NCK1 and SRC. Interacts (tyrosine phosphorylated form) with INSR, the interaction (Tyr-27-phosphorylated form) is increased on insulin stimulation. Interacts (Tyr-19 phosphorylated form) with MAPK1 (phosphorylated form); the interaction, promoted by insulin, leads to nuclear location and MAPK1 activation. Interacts with STAT3; the interaction is increased on insulin-induced tyrosine phosphorylation leading to STAT activation. Phosphorylated on serine and tyrosine residues. CAV1 promotes phosphorylation on Ser-23 which then targets the complex to the plasma membrane, lipid rafts and caveolae. Phosphorylation on Ser-36 appears to modulate mitosis in endothelial cells. Phosphorylation on both Tyr-19 and Tyr-27 is required for insulin-induced 'Ser-727' phosphorylation of STAT3 and its activation. Phosphorylation on Tyr-19 is required for insulin-induced phosphorylation of MAPK1 and DNA binding of STAT3. Tyrosine phosphorylation is induced by both EGF and insulin.

It localises to the nucleus. It is found in the cytoplasm. Its subcellular location is the golgi apparatus membrane. The protein localises to the cell membrane. The protein resides in the membrane. It localises to the caveola. Its function is as follows. May act as a scaffolding protein within caveolar membranes. Interacts directly with G-protein alpha subunits and can functionally regulate their activity. Acts as an accessory protein in conjunction with CAV1 in targeting to lipid rafts and driving caveolae formation. The Ser-36 phosphorylated form has a role in modulating mitosis in endothelial cells. Positive regulator of cellular mitogenesis of the MAPK signaling pathway. Required for the insulin-stimulated nuclear translocation and activation of MAPK1 and STAT3, and the subsequent regulation of cell cycle progression. This chain is Caveolin-2 (Cav2), found in Mus musculus (Mouse).